A 503-amino-acid chain; its full sequence is Aspartyl/glutamyl-tRNA(Asn/Gln) amidotransferase subunit B (503 aa).

It belongs to the GatB/GatE family. GatB subfamily. In terms of assembly, heterotrimer of A, B and C subunits.

The enzyme catalyses L-glutamyl-tRNA(Gln) + L-glutamine + ATP + H2O = L-glutaminyl-tRNA(Gln) + L-glutamate + ADP + phosphate + H(+). The catalysed reaction is L-aspartyl-tRNA(Asn) + L-glutamine + ATP + H2O = L-asparaginyl-tRNA(Asn) + L-glutamate + ADP + phosphate + 2 H(+). In terms of biological role, allows the formation of correctly charged Asn-tRNA(Asn) or Gln-tRNA(Gln) through the transamidation of misacylated Asp-tRNA(Asn) or Glu-tRNA(Gln) in organisms which lack either or both of asparaginyl-tRNA or glutaminyl-tRNA synthetases. The reaction takes place in the presence of glutamine and ATP through an activated phospho-Asp-tRNA(Asn) or phospho-Glu-tRNA(Gln). The chain is Aspartyl/glutamyl-tRNA(Asn/Gln) amidotransferase subunit B from Ruegeria pomeroyi (strain ATCC 700808 / DSM 15171 / DSS-3) (Silicibacter pomeroyi).